A 91-amino-acid polypeptide reads, in one-letter code: Small ribosomal subunit protein uS19 (91 aa).

Belongs to the universal ribosomal protein uS19 family.

Protein S19 forms a complex with S13 that binds strongly to the 16S ribosomal RNA. The chain is Small ribosomal subunit protein uS19 from Colwellia psychrerythraea (strain 34H / ATCC BAA-681) (Vibrio psychroerythus).